A 138-amino-acid polypeptide reads, in one-letter code: Fluoride-specific ion channel FluC (138 aa).

Helical transmembrane passes span 34-54 (FMPKLWEGLSVGAGAAVGACA), 60-80 (MQFGEGLWPILAINMLGSFLM), 88-108 (FWGTGVLGGFTTFSAFAVVLV), and 112-132 (LPHAVAYLTVTVVSCVAAWLM). Gly-95 and Thr-98 together coordinate Na(+).

The protein belongs to the fluoride channel Fluc/FEX (TC 1.A.43) family.

Its subcellular location is the cell membrane. It catalyses the reaction fluoride(in) = fluoride(out). With respect to regulation, na(+) is not transported, but it plays an essential structural role and its presence is essential for fluoride channel function. In terms of biological role, fluoride-specific ion channel. Important for reducing fluoride concentration in the cell, thus reducing its toxicity. This is Fluoride-specific ion channel FluC from Corynebacterium efficiens (strain DSM 44549 / YS-314 / AJ 12310 / JCM 11189 / NBRC 100395).